The sequence spans 197 residues: Xanthine phosphoribosyltransferase (197 aa).

Xanthine-binding residues include L20 and N27. A 5-phospho-alpha-D-ribose 1-diphosphate-binding site is contributed by 128–132; it reads ANGQA. K156 contacts xanthine.

The protein belongs to the purine/pyrimidine phosphoribosyltransferase family. Xpt subfamily. Homodimer.

It localises to the cytoplasm. It catalyses the reaction XMP + diphosphate = xanthine + 5-phospho-alpha-D-ribose 1-diphosphate. Its pathway is purine metabolism; XMP biosynthesis via salvage pathway; XMP from xanthine: step 1/1. Functionally, converts the preformed base xanthine, a product of nucleic acid breakdown, to xanthosine 5'-monophosphate (XMP), so it can be reused for RNA or DNA synthesis. This is Xanthine phosphoribosyltransferase from Bacillus cereus (strain ATCC 10987 / NRS 248).